A 251-amino-acid polypeptide reads, in one-letter code: RNA polymerase sigma factor SigI (251 aa).

The Polymerase core binding signature appears at 61–74 (DEFSIGLIAFNEAI). The H-T-H motif DNA-binding region spans 206 to 225 (VKQLEQLVSVSRKTIERNRK).

Belongs to the sigma-70 factor family. SigI subfamily. Interacts with RsgI.

It localises to the cytoplasm. Negatively regulated by the anti-sigma-I factor RsgI. Upon exposure to heat, SigI is released from RsgI and activated. Transient heat activation of SigI may depend upon DnaK chaperone. Its function is as follows. Sigma factors are initiation factors that promote the attachment of RNA polymerase to specific initiation sites and are then released. This sigma factor is involved in regulation of cell wall metabolism in response to heat stress. Acts by regulating the expression of genes such as bcrC, mreBH and lytE. Also plays a role in survival at low temperatures. This chain is RNA polymerase sigma factor SigI, found in Bacillus subtilis (strain 168).